A 193-amino-acid chain; its full sequence is Xanthine phosphoribosyltransferase (193 aa).

Xanthine is bound by residues Leu-20 and Asn-27. A 5-phospho-alpha-D-ribose 1-diphosphate-binding site is contributed by 129 to 133; it reads ANGKA. Residue Lys-157 participates in xanthine binding.

This sequence belongs to the purine/pyrimidine phosphoribosyltransferase family. Xpt subfamily. As to quaternary structure, homodimer.

Its subcellular location is the cytoplasm. The catalysed reaction is XMP + diphosphate = xanthine + 5-phospho-alpha-D-ribose 1-diphosphate. It participates in purine metabolism; XMP biosynthesis via salvage pathway; XMP from xanthine: step 1/1. In terms of biological role, converts the preformed base xanthine, a product of nucleic acid breakdown, to xanthosine 5'-monophosphate (XMP), so it can be reused for RNA or DNA synthesis. In Bifidobacterium longum subsp. infantis (strain ATCC 15697 / DSM 20088 / JCM 1222 / NCTC 11817 / S12), this protein is Xanthine phosphoribosyltransferase.